We begin with the raw amino-acid sequence, 407 residues long: Substance-P receptor (407 aa).

At 1 to 31 (MDNVLPVDSDLSPNISTNTSEPNQFVQPAWQ) the chain is on the extracellular side. N-linked (GlcNAc...) asparagine glycans are attached at residues Asn14 and Asn18. A helical membrane pass occupies residues 32–54 (IVLWAAAYTVIVVTSVVGNVVVM). Topologically, residues 55 to 64 (WIILAHKRMR) are cytoplasmic. Residues 65–86 (TVTNYFLVNLAFAEASMAAFNT) traverse the membrane as a helical segment. The Extracellular portion of the chain corresponds to 87 to 106 (VVNFTYAVHNEWYYGLFYCK). A disulfide bridge connects residues Cys105 and Cys180. Residues 107–128 (FHNFFPIAAVFASIYSMTAVAF) traverse the membrane as a helical segment. Over 129 to 148 (DRYMAIIHPLQPRLSATATK) the chain is Cytoplasmic. Residues 149-169 (VVICVIWVLALLLAFPQGYYS) form a helical membrane-spanning segment. Over 170–194 (TTETMPSRVVCMIEWPEHPNKIYEK) the chain is Extracellular. A helical membrane pass occupies residues 195 to 219 (VYHICVTVLIYFLPLLVIGYAYTVV). His197 is a binding site for CP-96345. At 220 to 248 (GITLWASEIPGDSSDRYHEQVSAKRKVVK) the chain is on the cytoplasmic side. A helical transmembrane segment spans residues 249–270 (MMIVVVCTFAICWLPFHIFFLL). Residues 271–283 (PYINPDLYLKKFI) are Extracellular-facing. Residues 284 to 308 (QQVYLAIMWLAMSSTMYNPIIYCCL) form a helical membrane-spanning segment. Residues 309–407 (NDRFRLGFKH…SFSFSSNVLS (99 aa)) are Cytoplasmic-facing. A lipid anchor (S-palmitoyl cysteine) is attached at Cys322. Residues 364–407 (AHEEEPEDGPKATPSSLDLTSNCSSRSDSKTMTESFSFSSNVLS) form a disordered region. The segment covering 376 to 407 (TPSSLDLTSNCSSRSDSKTMTESFSFSSNVLS) has biased composition (polar residues).

Belongs to the G-protein coupled receptor 1 family. Interacts with ARRB1.

The protein localises to the cell membrane. Functionally, this is a receptor for the tachykinin neuropeptide substance P. It is probably associated with G proteins that activate a phosphatidylinositol-calcium second messenger system. The rank order of affinity of this receptor to tachykinins is: substance P &gt; substance K &gt; neuromedin-K. The sequence is that of Substance-P receptor (TACR1) from Homo sapiens (Human).